Consider the following 333-residue polypeptide: tRNA(Ile)-lysidine synthase (333 aa).

25-30 (SGGPDS) provides a ligand contact to ATP.

It belongs to the tRNA(Ile)-lysidine synthase family.

The protein resides in the cytoplasm. The enzyme catalyses cytidine(34) in tRNA(Ile2) + L-lysine + ATP = lysidine(34) in tRNA(Ile2) + AMP + diphosphate + H(+). In terms of biological role, ligates lysine onto the cytidine present at position 34 of the AUA codon-specific tRNA(Ile) that contains the anticodon CAU, in an ATP-dependent manner. Cytidine is converted to lysidine, thus changing the amino acid specificity of the tRNA from methionine to isoleucine. The sequence is that of tRNA(Ile)-lysidine synthase from Ureaplasma parvum serovar 3 (strain ATCC 700970).